Consider the following 530-residue polypeptide: UDP-N-acetylmuramoyl-L-alanyl-D-glutamate--2,6-diaminopimelate ligase (530 aa).

Leu52 serves as a coordination point for UDP-N-acetyl-alpha-D-muramoyl-L-alanyl-D-glutamate. 139-145 provides a ligand contact to ATP; the sequence is GTSGKTT. UDP-N-acetyl-alpha-D-muramoyl-L-alanyl-D-glutamate contacts are provided by residues 181–182, Ser208, and Arg216; that span reads TT. Lys248 is modified (N6-carboxylysine). Residues Arg410, 434 to 437, Gly488, and Glu492 contribute to the meso-2,6-diaminopimelate site; that span reads DNPR. The short motif at 434-437 is the Meso-diaminopimelate recognition motif element; the sequence is DNPR.

It belongs to the MurCDEF family. MurE subfamily. Mg(2+) is required as a cofactor. Carboxylation is probably crucial for Mg(2+) binding and, consequently, for the gamma-phosphate positioning of ATP.

It localises to the cytoplasm. It catalyses the reaction UDP-N-acetyl-alpha-D-muramoyl-L-alanyl-D-glutamate + meso-2,6-diaminopimelate + ATP = UDP-N-acetyl-alpha-D-muramoyl-L-alanyl-gamma-D-glutamyl-meso-2,6-diaminopimelate + ADP + phosphate + H(+). Its pathway is cell wall biogenesis; peptidoglycan biosynthesis. Functionally, catalyzes the addition of meso-diaminopimelic acid to the nucleotide precursor UDP-N-acetylmuramoyl-L-alanyl-D-glutamate (UMAG) in the biosynthesis of bacterial cell-wall peptidoglycan. The chain is UDP-N-acetylmuramoyl-L-alanyl-D-glutamate--2,6-diaminopimelate ligase from Mycobacterium leprae (strain TN).